The primary structure comprises 153 residues: UPF0756 membrane protein Pjdr2_2290 (153 aa).

Helical transmembrane passes span 6-26 (LILV…IATA), 50-70 (LELG…SGKV), 75-95 (LIAA…AVAA), 111-131 (MVVG…GIPV), and 132-152 (GPLM…LMSG).

It belongs to the UPF0756 family.

It localises to the cell membrane. The sequence is that of UPF0756 membrane protein Pjdr2_2290 from Paenibacillus sp. (strain JDR-2).